The chain runs to 484 residues: tRNA sulfurtransferase (484 aa).

Positions 61 to 165 (PLILDLLKRT…GDKMLLVEAR (105 aa)) constitute a THUMP domain. Residues 183–184 (LI), lysine 265, glycine 287, and glutamine 296 each bind ATP. Cysteine 344 and cysteine 456 are disulfide-bonded. Residues 404-483 (LTEKDIILDI…YQNVKVFNLP (80 aa)) enclose the Rhodanese domain. Catalysis depends on cysteine 456, which acts as the Cysteine persulfide intermediate.

It belongs to the ThiI family.

It is found in the cytoplasm. The enzyme catalyses [ThiI sulfur-carrier protein]-S-sulfanyl-L-cysteine + a uridine in tRNA + 2 reduced [2Fe-2S]-[ferredoxin] + ATP + H(+) = [ThiI sulfur-carrier protein]-L-cysteine + a 4-thiouridine in tRNA + 2 oxidized [2Fe-2S]-[ferredoxin] + AMP + diphosphate. The catalysed reaction is [ThiS sulfur-carrier protein]-C-terminal Gly-Gly-AMP + S-sulfanyl-L-cysteinyl-[cysteine desulfurase] + AH2 = [ThiS sulfur-carrier protein]-C-terminal-Gly-aminoethanethioate + L-cysteinyl-[cysteine desulfurase] + A + AMP + 2 H(+). It participates in cofactor biosynthesis; thiamine diphosphate biosynthesis. Catalyzes the ATP-dependent transfer of a sulfur to tRNA to produce 4-thiouridine in position 8 of tRNAs, which functions as a near-UV photosensor. Also catalyzes the transfer of sulfur to the sulfur carrier protein ThiS, forming ThiS-thiocarboxylate. This is a step in the synthesis of thiazole, in the thiamine biosynthesis pathway. The sulfur is donated as persulfide by IscS. This Haemophilus ducreyi (strain 35000HP / ATCC 700724) protein is tRNA sulfurtransferase.